We begin with the raw amino-acid sequence, 122 residues long: Large ribosomal subunit protein uL14 (122 aa).

The protein belongs to the universal ribosomal protein uL14 family. In terms of assembly, part of the 50S ribosomal subunit. Forms a cluster with proteins L3 and L19. In the 70S ribosome, L14 and L19 interact and together make contacts with the 16S rRNA in bridges B5 and B8.

Binds to 23S rRNA. Forms part of two intersubunit bridges in the 70S ribosome. In Orientia tsutsugamushi (strain Ikeda) (Rickettsia tsutsugamushi), this protein is Large ribosomal subunit protein uL14.